The sequence spans 376 residues: Lipid-A-disaccharide synthase (376 aa).

Belongs to the LpxB family.

It carries out the reaction a lipid X + a UDP-2-N,3-O-bis[(3R)-3-hydroxyacyl]-alpha-D-glucosamine = a lipid A disaccharide + UDP + H(+). It participates in bacterial outer membrane biogenesis; LPS lipid A biosynthesis. In terms of biological role, condensation of UDP-2,3-diacylglucosamine and 2,3-diacylglucosamine-1-phosphate to form lipid A disaccharide, a precursor of lipid A, a phosphorylated glycolipid that anchors the lipopolysaccharide to the outer membrane of the cell. This chain is Lipid-A-disaccharide synthase, found in Coxiella burnetii (strain CbuG_Q212) (Coxiella burnetii (strain Q212)).